A 266-amino-acid polypeptide reads, in one-letter code: 22 kDa alpha-zein 4 (266 aa).

Positions methionine 1–alanine 21 are cleaved as a signal peptide.

The protein belongs to the zein family. In terms of assembly, interacts with OP10 (via N-terminus). In terms of tissue distribution, expressed in endosperm, mainly in the peripheral regions.

Its function is as follows. Zeins are major seed storage proteins. This is 22 kDa alpha-zein 4 from Zea mays (Maize).